A 203-amino-acid chain; its full sequence is Holliday junction branch migration complex subunit RuvA (203 aa).

A domain I region spans residues 1–64 (MFAYFRGRLT…EDAFLLYGFS (64 aa)). The segment at 65 to 143 (SESERQLFRL…KMSPDGGKTI (79 aa)) is domain II. The interval 144 to 150 (ASGSGGN) is flexible linker. Residues 151 to 203 (LALQIKDDALNALITLGFSKPAAQKAVTGILEGNPSLSVEEVVKSALVSIHNS) are domain III.

The protein belongs to the RuvA family. As to quaternary structure, homotetramer. Forms an RuvA(8)-RuvB(12)-Holliday junction (HJ) complex. HJ DNA is sandwiched between 2 RuvA tetramers; dsDNA enters through RuvA and exits via RuvB. An RuvB hexamer assembles on each DNA strand where it exits the tetramer. Each RuvB hexamer is contacted by two RuvA subunits (via domain III) on 2 adjacent RuvB subunits; this complex drives branch migration. In the full resolvosome a probable DNA-RuvA(4)-RuvB(12)-RuvC(2) complex forms which resolves the HJ.

The protein localises to the cytoplasm. The RuvA-RuvB-RuvC complex processes Holliday junction (HJ) DNA during genetic recombination and DNA repair, while the RuvA-RuvB complex plays an important role in the rescue of blocked DNA replication forks via replication fork reversal (RFR). RuvA specifically binds to HJ cruciform DNA, conferring on it an open structure. The RuvB hexamer acts as an ATP-dependent pump, pulling dsDNA into and through the RuvAB complex. HJ branch migration allows RuvC to scan DNA until it finds its consensus sequence, where it cleaves and resolves the cruciform DNA. This Chlorobium limicola (strain DSM 245 / NBRC 103803 / 6330) protein is Holliday junction branch migration complex subunit RuvA.